The chain runs to 232 residues: Lipopolysaccharide core heptose(II) kinase WaaY (232 aa).

It belongs to the protein kinase superfamily. RfaY/WaaY family.

The catalysed reaction is alpha-D-Glc-(1-&gt;3)-[L-alpha-D-Hep-(1-&gt;7)]-L-alpha-D-Hep-(1-&gt;3)-4-O-PO3(2-)-L-alpha-D-Hep-(1-&gt;5)-[alpha-Kdo-(2-&gt;4)]-alpha-Kdo-(2-&gt;6)-lipid A + ATP = alpha-D-Glc-(1-&gt;3)-[L-alpha-D-Hep-(1-&gt;7)]-4-O-PO3(2-)-L-alpha-D-Hep-(1-&gt;3)-4-O-PO3(2-)-L-alpha-D-Hep-(1-&gt;5)-[alpha-Kdo-(2-&gt;4)]-alpha-Kdo-(2-&gt;6)-lipid A + ADP + H(+). The protein operates within bacterial outer membrane biogenesis; LPS core biosynthesis. Kinase involved in the biosynthesis of the core oligosaccharide region of lipopolysaccharide (LPS). Catalyzes the phosphorylation of the second heptose unit (HepII) of the inner core. The sequence is that of Lipopolysaccharide core heptose(II) kinase WaaY from Salmonella typhimurium (strain LT2 / SGSC1412 / ATCC 700720).